The following is a 66-amino-acid chain: Large ribosomal subunit protein bL35 (66 aa).

The span at M1–R16 shows a compositional bias: basic residues. The disordered stretch occupies residues M1–G21.

It belongs to the bacterial ribosomal protein bL35 family.

This chain is Large ribosomal subunit protein bL35, found in Streptococcus gordonii (strain Challis / ATCC 35105 / BCRC 15272 / CH1 / DL1 / V288).